We begin with the raw amino-acid sequence, 691 residues long: DNA ligase (691 aa).

NAD(+) is bound by residues 53–57 (DSEYD), 102–103 (SL), and E135. Catalysis depends on K137, which acts as the N6-AMP-lysine intermediate. Residues R158, E195, K310, and K334 each coordinate NAD(+). Positions 428, 431, 446, and 452 each coordinate Zn(2+). Residues 613-691 (SEGLPLDGQT…EEEFLALVGE (79 aa)) enclose the BRCT domain.

This sequence belongs to the NAD-dependent DNA ligase family. LigA subfamily. It depends on Mg(2+) as a cofactor. The cofactor is Mn(2+).

The catalysed reaction is NAD(+) + (deoxyribonucleotide)n-3'-hydroxyl + 5'-phospho-(deoxyribonucleotide)m = (deoxyribonucleotide)n+m + AMP + beta-nicotinamide D-nucleotide.. In terms of biological role, DNA ligase that catalyzes the formation of phosphodiester linkages between 5'-phosphoryl and 3'-hydroxyl groups in double-stranded DNA using NAD as a coenzyme and as the energy source for the reaction. It is essential for DNA replication and repair of damaged DNA. This chain is DNA ligase, found in Psychrobacter arcticus (strain DSM 17307 / VKM B-2377 / 273-4).